Consider the following 440-residue polypeptide: C4-dicarboxylate transport protein (440 aa).

The next 9 helical transmembrane spans lie at 7-29, 49-66, 79-101, 143-165, 186-208, 221-243, 291-313, 328-350, and 355-377; these read LYKS…GHYY, MVIA…IAGM, ALLY…VNVV, VVGA…FGFA, VMFN…AMAF, LGYL…LGGI, VVGL…YLTM, ITHQ…GVTG, and VLAA…ILGI. Residues 419–440 form a disordered region; sequence GGAPLIDTRPTDDLGVAEGPAR.

It belongs to the dicarboxylate/amino acid:cation symporter (DAACS) (TC 2.A.23) family.

The protein resides in the cell inner membrane. Functionally, responsible for the transport of dicarboxylates such as succinate, fumarate, and malate from the periplasm across the membrane. The sequence is that of C4-dicarboxylate transport protein from Pseudomonas putida (strain ATCC 47054 / DSM 6125 / CFBP 8728 / NCIMB 11950 / KT2440).